Reading from the N-terminus, the 421-residue chain is UDP-N-acetylglucosamine 1-carboxyvinyltransferase 1 (421 aa).

22 to 23 (KN) contacts phosphoenolpyruvate. Arg-95 is a binding site for UDP-N-acetyl-alpha-D-glucosamine. Cys-119 serves as the catalytic Proton donor. The residue at position 119 (Cys-119) is a 2-(S-cysteinyl)pyruvic acid O-phosphothioketal. Residues 124–128 (RPIEQ), Asp-308, and Val-330 each bind UDP-N-acetyl-alpha-D-glucosamine.

Belongs to the EPSP synthase family. MurA subfamily.

It localises to the cytoplasm. The catalysed reaction is phosphoenolpyruvate + UDP-N-acetyl-alpha-D-glucosamine = UDP-N-acetyl-3-O-(1-carboxyvinyl)-alpha-D-glucosamine + phosphate. The protein operates within cell wall biogenesis; peptidoglycan biosynthesis. In terms of biological role, cell wall formation. Adds enolpyruvyl to UDP-N-acetylglucosamine. The polypeptide is UDP-N-acetylglucosamine 1-carboxyvinyltransferase 1 (Staphylococcus epidermidis (strain ATCC 35984 / DSM 28319 / BCRC 17069 / CCUG 31568 / BM 3577 / RP62A)).